A 260-amino-acid polypeptide reads, in one-letter code: Zinc import ATP-binding protein ZnuC (260 aa).

One can recognise an ABC transporter domain in the interval 14–229 (LTARNLCADR…PEFARLFGDQ (216 aa)). 46–53 (GPNGAGKS) provides a ligand contact to ATP.

This sequence belongs to the ABC transporter superfamily. Zinc importer (TC 3.A.1.15.5) family. As to quaternary structure, the complex is composed of two ATP-binding proteins (ZnuC), two transmembrane proteins (ZnuB) and a solute-binding protein (ZnuA).

Its subcellular location is the cell inner membrane. The catalysed reaction is Zn(2+)(out) + ATP(in) + H2O(in) = Zn(2+)(in) + ADP(in) + phosphate(in) + H(+)(in). Functionally, part of the ABC transporter complex ZnuABC involved in zinc import. Responsible for energy coupling to the transport system. This chain is Zinc import ATP-binding protein ZnuC, found in Magnetococcus marinus (strain ATCC BAA-1437 / JCM 17883 / MC-1).